We begin with the raw amino-acid sequence, 625 residues long: Chaperone protein HtpG (625 aa).

An a; substrate-binding region spans residues M1–R332. The segment at E333–R545 is b. Residues M546 to R625 form a c region.

This sequence belongs to the heat shock protein 90 family. As to quaternary structure, homodimer.

The protein localises to the cytoplasm. In terms of biological role, molecular chaperone. Has ATPase activity. The sequence is that of Chaperone protein HtpG from Chlorobium phaeovibrioides (strain DSM 265 / 1930) (Prosthecochloris vibrioformis (strain DSM 265)).